A 62-amino-acid chain; its full sequence is Conotoxin TeAr151 (62 aa).

A signal peptide spans 1–22 (MRCLPVFVVLLLLIASAPSVDA). The propeptide occupies 23-47 (QPKTKDDVPLAPLHDNIQNTLQTLR). Met-55 carries the methionine sulfoxide; partial modification. A Serine amide modification is found at Ser-60.

Belongs to the conotoxin T superfamily. Contains 2 disulfide bonds. Post-translationally, contains 2 disulfide bonds that can be either 'C1-C3, C2-C4' or 'C1-C4, C2-C3', since these disulfide connectivities have been observed for conotoxins with cysteine framework V (for examples, see AC P0DQQ7 and AC P81755).. As to expression, expressed by the venom duct. Is mostly present in part 5 of the venom duct (distal part near the pharynx), and less abundantly present in part 4 of the venom duct.

The protein localises to the secreted. This chain is Conotoxin TeAr151, found in Conus textile (Cloth-of-gold cone).